We begin with the raw amino-acid sequence, 290 residues long: Protease HtpX homolog (290 aa).

Helical transmembrane passes span 5–27 (MWLRTGVLMAILTGLLMGIGYLF) and 32–51 (VAFIMFLFSMFFNFITYWYS). H133 is a binding site for Zn(2+). E134 is a catalytic residue. Zn(2+) is bound at residue H137. The next 2 membrane-spanning stretches (helical) occupy residues 143–163 (ILIGTVAAAMAGAIMQLAYWA) and 182–202 (IIGAILVAILAPIAAMLIQAA). Residue E208 participates in Zn(2+) binding.

Belongs to the peptidase M48B family. Requires Zn(2+) as cofactor.

The protein resides in the cell membrane. The polypeptide is Protease HtpX homolog (Thermococcus kodakarensis (strain ATCC BAA-918 / JCM 12380 / KOD1) (Pyrococcus kodakaraensis (strain KOD1))).